A 298-amino-acid chain; its full sequence is Quinolinate synthase (298 aa).

2 residues coordinate iminosuccinate: histidine 19 and serine 36. Residue cysteine 81 participates in [4Fe-4S] cluster binding. Iminosuccinate is bound by residues 107–109 (YVN) and serine 124. Cysteine 168 contributes to the [4Fe-4S] cluster binding site. Residues 193–195 (HPE) and threonine 210 contribute to the iminosuccinate site. Cysteine 254 contacts [4Fe-4S] cluster.

Belongs to the quinolinate synthase family. Type 2 subfamily. [4Fe-4S] cluster serves as cofactor.

The protein resides in the cytoplasm. The enzyme catalyses iminosuccinate + dihydroxyacetone phosphate = quinolinate + phosphate + 2 H2O + H(+). It participates in cofactor biosynthesis; NAD(+) biosynthesis; quinolinate from iminoaspartate: step 1/1. In terms of biological role, catalyzes the condensation of iminoaspartate with dihydroxyacetone phosphate to form quinolinate. This is Quinolinate synthase from Thermotoga sp. (strain RQ2).